We begin with the raw amino-acid sequence, 88 residues long: Small ribosomal subunit protein uS17 (88 aa).

This sequence belongs to the universal ribosomal protein uS17 family. Part of the 30S ribosomal subunit.

In terms of biological role, one of the primary rRNA binding proteins, it binds specifically to the 5'-end of 16S ribosomal RNA. The protein is Small ribosomal subunit protein uS17 of Nitratidesulfovibrio vulgaris (strain DSM 19637 / Miyazaki F) (Desulfovibrio vulgaris).